A 375-amino-acid polypeptide reads, in one-letter code: Phosphate acyltransferase (375 aa).

Residues 354-375 (AQDDATSADADAPGDSETGSTN) form a disordered region. Positions 356–368 (DDATSADADAPGD) are enriched in low complexity.

The protein belongs to the PlsX family. As to quaternary structure, homodimer. Probably interacts with PlsY.

Its subcellular location is the cytoplasm. It catalyses the reaction a fatty acyl-[ACP] + phosphate = an acyl phosphate + holo-[ACP]. The protein operates within lipid metabolism; phospholipid metabolism. Functionally, catalyzes the reversible formation of acyl-phosphate (acyl-PO(4)) from acyl-[acyl-carrier-protein] (acyl-ACP). This enzyme utilizes acyl-ACP as fatty acyl donor, but not acyl-CoA. The chain is Phosphate acyltransferase from Ruegeria sp. (strain TM1040) (Silicibacter sp.).